Here is a 108-residue protein sequence, read N- to C-terminus: MGLSSDSPVRVEWIAAVTFAAGTAALGYLAYKKFYAKESRTKAMVNLQIQKDNPKVVHAFDMEDLGDKAVYCRCWRSKKFPFCDGAHIKHNEETGDNVGPLIIKKKET.

A helical; Signal-anchor for type III membrane protein membrane pass occupies residues 13-31 (WIAAVTFAAGTAALGYLAY). At 32-108 (KKFYAKESRT…GPLIIKKKET (77 aa)) the chain is on the cytoplasmic side. A Glycyl lysine isopeptide (Lys-Gly) (interchain with G-Cter in ubiquitin) cross-link involves residue Lys42. Lys55 acts as the Schiff-base intermediate with pyridoxal 5'-phosphate in catalysis. N6-acetyllysine; alternate occurs at positions 55 and 68. Glycyl lysine isopeptide (Lys-Gly) (interchain with G-Cter in ubiquitin); alternate cross-links involve residues Lys55 and Lys68. [2Fe-2S] cluster is bound by residues Cys72 and Cys74. Residues Lys78 and Lys79 each participate in a glycyl lysine isopeptide (Lys-Gly) (interchain with G-Cter in ubiquitin) cross-link. The [2Fe-2S] cluster site is built by Cys83 and His87. A Glycyl lysine isopeptide (Lys-Gly) (interchain with G-Cter in ubiquitin) cross-link involves residue Lys89. An N6-acetyllysine; alternate modification is found at Lys104. Lys104 is covalently cross-linked (Glycyl lysine isopeptide (Lys-Gly) (interchain with G-Cter in ubiquitin); alternate). Glycyl lysine isopeptide (Lys-Gly) (interchain with G-Cter in ubiquitin) cross-links involve residues Lys105 and Lys106.

It belongs to the CISD protein family. In terms of assembly, homodimer. The cofactor is [2Fe-2S] cluster. Pyridoxal 5'-phosphate is required as a cofactor. Ubiquitinated by PRKN during mitophagy, leading to its degradation and enhancement of mitophagy. Deubiquitinated by USP30.

The protein localises to the mitochondrion outer membrane. The enzyme catalyses L-cysteine + 2-oxoglutarate = 2-oxo-3-sulfanylpropanoate + L-glutamate. Functionally, L-cysteine transaminase that catalyzes the reversible transfer of the amino group from L-cysteine to the alpha-keto acid 2-oxoglutarate to respectively form 2-oxo-3-sulfanylpropanoate and L-glutamate. The catalytic cycle occurs in the presence of pyridoxal 5'-phosphate (PLP) cofactor that facilitates transamination by initially forming an internal aldimine with the epsilon-amino group of active site Lys-55 residue on the enzyme (PLP-enzyme aldimine), subsequently displaced by formation of an external aldimine with the substrate amino group (PLP-L-cysteine aldimine). The external aldimine is further deprotonated to form a carbanion intermediate, which in the presence of 2-oxoglutarate regenerates PLP yielding final products 2-oxo-3-sulfanylpropanoate and L-glutamate. The proton transfer in carbanion intermediate is suggested to be controlled by the active site lysine residue, whereas PLP stabilizes carbanion structure through electron delocalization, also known as the electron sink effect. Plays a key role in regulating maximal capacity for electron transport and oxidative phosphorylation. May be involved in iron-sulfur cluster shuttling and/or in redox reactions. Can transfer the [2Fe-2S] cluster to an apo-acceptor protein only when in the oxidation state, likely serving as a redox sensor that regulates mitochondrial iron-sulfur cluster assembly and iron trafficking upon oxidative stress. This Rattus norvegicus (Rat) protein is CDGSH iron-sulfur domain-containing protein 1 (Cisd1).